A 100-amino-acid polypeptide reads, in one-letter code: Large ribosomal subunit protein uL23 (100 aa).

This sequence belongs to the universal ribosomal protein uL23 family. As to quaternary structure, part of the 50S ribosomal subunit. Contacts protein L29, and trigger factor when it is bound to the ribosome.

Functionally, one of the early assembly proteins it binds 23S rRNA. One of the proteins that surrounds the polypeptide exit tunnel on the outside of the ribosome. Forms the main docking site for trigger factor binding to the ribosome. This Prochlorococcus marinus (strain MIT 9515) protein is Large ribosomal subunit protein uL23.